A 268-amino-acid polypeptide reads, in one-letter code: Tetraspanin-33 (268 aa).

At 1-23 (MVRKSPGSGKEEDFTFISPVVKY) the chain is on the cytoplasmic side. Residues 24–44 (LLIFFNMLFWVISMVMVGIGV) form a helical membrane-spanning segment. The Extracellular segment spans residues 45-63 (YARLLKHAEAAMACLAVDP). The chain crosses the membrane as a helical span at residues 64–84 (ALLLIGVGILMFLITFCGCIG). Residues 85–95 (SLRENICLLQT) are Cytoplasmic-facing. Residues 96–116 (FSICLTLVFLLQLAVGIVGFI) form a helical membrane-spanning segment. At 117–226 (FSDKARGKVS…FIHTNGCIDR (110 aa)) the chain is on the extracellular side. Intrachain disulfides connect C155–C223, C156–C188, C172–C182, and C189–C202. Residues N171 and N176 are each glycosylated (N-linked (GlcNAc...) asparagine). Residues 227 to 247 (LVNWIHSNLFLLGGVALGLAI) form a helical membrane-spanning segment. Topologically, residues 248 to 268 (PQVTKHLRAKLIYTWRIGIQV) are cytoplasmic.

Belongs to the tetraspanin (TM4SF) family. Homodimer; disulfide-linked.

The protein resides in the cell membrane. The protein localises to the cell junction. It is found in the adherens junction. It localises to the cytoplasm. Part of TspanC8 subgroup, composed of 6 members that interact with the transmembrane metalloprotease ADAM10. This interaction is required for ADAM10 exit from the endoplasmic reticulum and for enzymatic maturation and trafficking to the cell surface as well as substrate specificity. Different TspanC8/ADAM10 complexes have distinct substrates. This Xenopus laevis (African clawed frog) protein is Tetraspanin-33 (tspan33).